Here is a 55-residue protein sequence, read N- to C-terminus: Sec-independent protein translocase protein TatA (55 aa).

Residues 1-21 (MSLGPWQLFLVLIIILVLFGA) form a helical membrane-spanning segment.

This sequence belongs to the TatA/E family. The Tat system comprises two distinct complexes: a TatABC complex, containing multiple copies of TatA, TatB and TatC subunits, and a separate TatA complex, containing only TatA subunits. Substrates initially bind to the TatABC complex, which probably triggers association of the separate TatA complex to form the active translocon.

The protein localises to the cell membrane. Part of the twin-arginine translocation (Tat) system that transports large folded proteins containing a characteristic twin-arginine motif in their signal peptide across membranes. TatA could form the protein-conducting channel of the Tat system. The chain is Sec-independent protein translocase protein TatA from Wolbachia pipientis wMel.